The primary structure comprises 545 residues: Glucose-6-phosphate isomerase (545 aa).

Glutamate 351 functions as the Proton donor in the catalytic mechanism. Catalysis depends on residues histidine 382 and lysine 510.

The protein belongs to the GPI family.

It localises to the cytoplasm. It catalyses the reaction alpha-D-glucose 6-phosphate = beta-D-fructose 6-phosphate. It participates in carbohydrate biosynthesis; gluconeogenesis. Its pathway is carbohydrate degradation; glycolysis; D-glyceraldehyde 3-phosphate and glycerone phosphate from D-glucose: step 2/4. Functionally, catalyzes the reversible isomerization of glucose-6-phosphate to fructose-6-phosphate. The chain is Glucose-6-phosphate isomerase from Shewanella baltica (strain OS185).